Consider the following 1564-residue polypeptide: Superkiller complex protein 3 (1564 aa).

At serine 2 the chain carries N-acetylserine. 20 TPR repeats span residues 6 to 39, 40 to 73, 272 to 305, 307 to 339, 386 to 419, 420 to 453, 455 to 492, 493 to 527, 564 to 597, 598 to 631, 633 to 665, 679 to 713, 790 to 824, 826 to 860, 861 to 894, 980 to 1013, 1020 to 1054, 1056 to 1084, 1326 to 1359, and 1400 to 1433; these read VKTA…EKNN, YNAW…EPDQ, GPGL…SPVC, SGWY…VDNL, PGLL…YPDL, AEVH…DTEV, EYHY…DTYM, GKVF…DDTD, KWAW…DPKD, FNCW…NPES, YSVF…KEDY, MAKA…RADV, AQHL…DSNN, LYWN…EQIN, AVAW…DPSY, APAF…LQTA, NVAI…LEDI, GFAL…VESE, KWSL…NPDQ, and VPAW…ASQR.

Belongs to the SKI3 family. In terms of assembly, component of the SKI complex which consists of SKIC2, SKIC3 and SKIC8. Interacts with PAF1. Widely expressed with the highest levels observed in vascular tissues, lymph node, pituitary, lung and intestine. Not expressed in the liver.

The protein resides in the cytoplasm. Its subcellular location is the nucleus. Functionally, component of the SKI complex, a multiprotein complex that assists the RNA-degrading exosome during the mRNA decay and quality-control pathways. The SKI complex catalyzes mRNA extraction from 80S ribosomal complexes in the 3'-5' direction and channels mRNA to the cytosolic exosome for degradation. SKI-mediated extraction of mRNA from stalled ribosomes allow binding of the Pelota-HBS1L complex and subsequent ribosome disassembly by ABCE1 for ribosome recycling. In the nucleus, the SKI complex associates with transcriptionally active genes in a manner dependent on PAF1 complex (PAF1C). The chain is Superkiller complex protein 3 from Homo sapiens (Human).